The sequence spans 294 residues: NAD kinase (294 aa).

Asp-74 serves as the catalytic Proton acceptor. NAD(+) is bound by residues 74–75, 148–149, His-159, Arg-176, Asp-178, 189–194, and Gln-249; these read DG, NE, and TAYSLS.

This sequence belongs to the NAD kinase family. A divalent metal cation serves as cofactor.

The protein resides in the cytoplasm. It carries out the reaction NAD(+) + ATP = ADP + NADP(+) + H(+). Involved in the regulation of the intracellular balance of NAD and NADP, and is a key enzyme in the biosynthesis of NADP. Catalyzes specifically the phosphorylation on 2'-hydroxyl of the adenosine moiety of NAD to yield NADP. The chain is NAD kinase from Vibrio atlanticus (strain LGP32) (Vibrio splendidus (strain Mel32)).